The chain runs to 340 residues: NADPH dehydrogenase (340 aa).

Ser-23–Cys-26 provides a ligand contact to FMN. Tyr-28 is a substrate binding site. 2 residues coordinate FMN: Ala-60 and Gln-102. His-164–His-167 lines the substrate pocket. FMN contacts are provided by residues Arg-215 and Ala-307–Arg-308.

It belongs to the NADH:flavin oxidoreductase/NADH oxidase family. NamA subfamily. Homotetramer. FMN serves as cofactor.

It catalyses the reaction A + NADPH + H(+) = AH2 + NADP(+). Catalyzes the reduction of the double bond of an array of alpha,beta-unsaturated aldehydes and ketones. It also reduces the nitro group of nitroester and nitroaromatic compounds. It could have a role in detoxification processes. The protein is NADPH dehydrogenase of Geobacillus sp. (strain WCH70).